The primary structure comprises 445 residues: D-serine dehydratase (445 aa).

N6-(pyridoxal phosphate)lysine is present on Lys118.

This sequence belongs to the serine/threonine dehydratase family. DsdA subfamily. As to quaternary structure, monomer. The cofactor is pyridoxal 5'-phosphate.

It carries out the reaction D-serine = pyruvate + NH4(+). The polypeptide is D-serine dehydratase (Serratia proteamaculans (strain 568)).